The following is a 346-amino-acid chain: Phosphoribosylformylglycinamidine cyclo-ligase (346 aa).

The protein belongs to the AIR synthase family.

Its subcellular location is the cytoplasm. It catalyses the reaction 2-formamido-N(1)-(5-O-phospho-beta-D-ribosyl)acetamidine + ATP = 5-amino-1-(5-phospho-beta-D-ribosyl)imidazole + ADP + phosphate + H(+). Its pathway is purine metabolism; IMP biosynthesis via de novo pathway; 5-amino-1-(5-phospho-D-ribosyl)imidazole from N(2)-formyl-N(1)-(5-phospho-D-ribosyl)glycinamide: step 2/2. The protein is Phosphoribosylformylglycinamidine cyclo-ligase of Synechococcus sp. (strain CC9311).